Consider the following 247-residue polypeptide: Carboxy-S-adenosyl-L-methionine synthase (247 aa).

Residues Tyr-40, Gly-65–Ser-67, Asp-90–Asn-91, Asp-122–Ile-123, Asn-137, and Arg-204 contribute to the S-adenosyl-L-methionine site.

This sequence belongs to the class I-like SAM-binding methyltransferase superfamily. Cx-SAM synthase family. Homodimer.

It catalyses the reaction prephenate + S-adenosyl-L-methionine = carboxy-S-adenosyl-L-methionine + 3-phenylpyruvate + H2O. In terms of biological role, catalyzes the conversion of S-adenosyl-L-methionine (SAM) to carboxy-S-adenosyl-L-methionine (Cx-SAM). The sequence is that of Carboxy-S-adenosyl-L-methionine synthase from Pseudomonas fluorescens (strain ATCC BAA-477 / NRRL B-23932 / Pf-5).